The primary structure comprises 1466 residues: Adhesion G protein-coupled receptor L1 (1466 aa).

A signal peptide spans 1–28; it reads MARLAAALWSLCVTTVLVTSATQGLSRA. Residues 29 to 852 lie on the Extracellular side of the membrane; the sequence is GLPFGLMRRE…EIYQGRINEL (824 aa). One can recognise an SUEL-type lectin domain in the interval 40–129; the sequence is ACEGYPIELR…KYLEVQYDCV (90 aa). Intrachain disulfides connect cysteine 41–cysteine 71, cysteine 50–cysteine 128, cysteine 83–cysteine 115, cysteine 96–cysteine 102, and cysteine 135–cysteine 317. Residue glutamate 42 coordinates alpha-L-rhamnose. Asparagine 98 carries an N-linked (GlcNAc...) asparagine glycan. An alpha-L-rhamnose-binding site is contributed by 117–120; sequence GTYK. Residues 134-393 enclose the Olfactomedin-like domain; it reads VCPGTLQKVL…VVRYSLEFGP (260 aa). The tract at residues 395–463 is disordered; it reads DPSAGPATSP…APAPSTRRPP (69 aa). Low complexity predominate over residues 400 to 436; the sequence is PATSPPLSTTTTARPTPLTSTASPAATTPLRRAPLTT. The segment covering 448–463 has biased composition (pro residues); the sequence is DLPPATAPAPSTRRPP. 2 disulfide bridges follow: cysteine 475–cysteine 510 and cysteine 498–cysteine 527. 6 N-linked (GlcNAc...) asparagine glycosylation sites follow: asparagine 526, asparagine 635, asparagine 736, asparagine 795, asparagine 800, and asparagine 821. The GAIN-B domain maps to 664–845; that stretch reads PARFLAAKQN…AVLMAHREIY (182 aa). Intrachain disulfides connect cysteine 796-cysteine 827 and cysteine 815-cysteine 829. A GPS region spans residues 796 to 845; it reads CSFWNYSERSMLGYWSTQGCRLVESNKTHTTCACSHLTNFAVLMAHREIY. Residues 853-873 traverse the membrane as a helical segment; that stretch reads LLSVITWVGIVISLVCLAICI. At 874-887 the chain is on the cytoplasmic side; it reads STFCFLRGLQTDRN. A helical membrane pass occupies residues 888-908; that stretch reads TIHKNLCINLFLAELLFLVGI. At 909-914 the chain is on the extracellular side; sequence DKTQYE. A helical transmembrane segment spans residues 915-935; the sequence is VACPIFAGLLHYFFLAAFSWL. Residues 936–958 are Cytoplasmic-facing; sequence CLEGVHLYLLLVEVFESEYSRTK. The helical transmembrane segment at 959–979 threads the bilayer; the sequence is YYYLGGYCFPALVVGIAAAID. Residues 980-996 lie on the Extracellular side of the membrane; that stretch reads YRSYGTEKACWLRVDNY. Residues 997–1017 traverse the membrane as a helical segment; that stretch reads FIWSFIGPVSFVIVVNLVFLM. The Cytoplasmic segment spans residues 1018–1044; the sequence is VTLHKMIRSSSVLKPDSSRLDNIKSWA. The helical transmembrane segment at 1045 to 1065 threads the bilayer; that stretch reads LGAIALLFLLGLTWAFGLLFI. The Extracellular segment spans residues 1066-1069; the sequence is NKES. The chain crosses the membrane as a helical span at residues 1070 to 1090; it reads VVMAYLFTTFNAFQGVFIFVF. Topologically, residues 1091 to 1466 are cytoplasmic; the sequence is HCALQKKVHK…DGQMQLVTSL (376 aa). An Omega-N-methylarginine modification is found at arginine 1188. Position 1214 is a phosphoserine (serine 1214). Disordered regions lie at residues 1242–1267, 1288–1319, 1352–1421, and 1443–1466; these read FNNSYSLRSGDFPPGDGGPEPPRGRN, RGASGGAKGPPPEPPVPPVPGVSEDEAGGPGS, ESES…SRPP, and YLAAPSLEGPGPDGDGQMQLVTSL. Residues 1296 to 1307 show a composition bias toward pro residues; the sequence is GPPPEPPVPPVP. Phosphoserine is present on serine 1319. The span at 1400-1412 shows a compositional bias: pro residues; that stretch reads ALPPPPPAPPGPP. Phosphoserine occurs at positions 1448 and 1465.

This sequence belongs to the G-protein coupled receptor 2 family. Adhesion G-protein coupled receptor (ADGR) subfamily. Forms a heterodimer, consisting of a large extracellular region (p120) non-covalently linked to a seven-transmembrane moiety (p85). Interacts with syntaxin and with proteins of the SHANK family via the PDZ domain. Interacts (via extracellular domain) with FLRT1, FLRT2 and FLRT3 (via extracellular domain). In terms of processing, autoproteolytically cleaved into 2 subunits, an extracellular subunit and a seven-transmembrane subunit. This proteolytic processing takes place early in the biosynthetic pathway, either in the endoplasmic reticulum or in the early compartment of the Golgi apparatus.

Its subcellular location is the cell membrane. It localises to the cell projection. The protein localises to the axon. The protein resides in the growth cone. It is found in the synapse. Its subcellular location is the presynaptic cell membrane. It localises to the synaptosome. Its function is as follows. Calcium-independent receptor of high affinity for alpha-latrotoxin, an excitatory neurotoxin present in black widow spider venom which triggers massive exocytosis from neurons and neuroendocrine cells. Receptor for TENM2 that mediates heterophilic synaptic cell-cell contact and postsynaptic specialization. Receptor probably implicated in the regulation of exocytosis. This Mus musculus (Mouse) protein is Adhesion G protein-coupled receptor L1.